Reading from the N-terminus, the 1021-residue chain is Ribosome quality control complex subunit 2 (1021 aa).

The stretch at I348–T388 forms a coiled coil. The interval N457–V484 is disordered. The span at D462–D480 shows a compositional bias: acidic residues. S478 is subject to Phosphoserine. Coiled coils occupy residues N507–R546 and D698–E727. Composition is skewed to polar residues over residues Y746–S761 and I839–A856. Disordered regions lie at residues Y746–E801 and H832–F905. Residues D876–F905 show a composition bias toward basic and acidic residues.

Belongs to the NEMF family. Component of the ribosome quality control complex (RQC), composed of the E3 ubiquitin ligase rkr1/ltn1, rqc1 and mtr1/rqc2, as well as cdc48 and its ubiquitin-binding cofactors associated with the 60S ribosomal subunit. RQC2 binds to the 40S-binding surface of tRNAs.

It is found in the cytoplasm. Functionally, key component of the ribosome quality control complex (RQC), a ribosome-associated complex that mediates the extraction of incompletely synthesized nascent chains from stalled ribosomes as well as their ubiquitin-mediated proteasomal degradation. Thereby, frees 60S subunit ribosomes from the stalled translation complex and prevents the accumulation of nascent polypeptide chains that are potentially toxic for the cell. Within the RQC complex, mtr1/rqc2 specifically binds stalled 60S ribosomal subunits by recognizing an exposed, nascent chain-conjugated tRNA moiety and promotes the recruitment of rkr1/ltn1 to stalled 60S subunits. Following binding to stalled 60S ribosomal subunits, mtr1/rqc2 mediates CAT tailing by recruiting alanine- and threonine-charged tRNA to the A-site and directing the elongation of stalled nascent chains independently of mRNA or 40S subunits, leading to non-templated C-terminal Ala and Thr extensions (CAT tails). CAT tails promote the rkr1/ltn1-mediated ubiquitination of incompletely synthesized nascent polypeptides: CAT tailing facilitates rkr1/ltn1-dependent ubiquitination by exposing lysine residues that would otherwise remain buried in the ribosomal exit tunnel. Following ubiquitination, incompletely synthesized nascent polypeptides are recognized by CDC48 and degraded by the proteasome. CAT-tailed proteins tend to aggregate and sequester chaperones and can induce proteotoxic stress; their rkr1/ltn1-dependent ubiquitination and degradation is required to prevent proteotoxic stress. The polypeptide is Ribosome quality control complex subunit 2 (Schizosaccharomyces pombe (strain 972 / ATCC 24843) (Fission yeast)).